Reading from the N-terminus, the 239-residue chain is ATP-dependent dethiobiotin synthetase BioD (239 aa).

Residue 15–20 (EIGKTF) participates in ATP binding. T19 lines the Mg(2+) pocket. K40 is an active-site residue. ATP is bound by residues D57, 118-121 (EGVG), and 178-179 (NH). Mg(2+) is bound by residues D57 and E118.

Belongs to the dethiobiotin synthetase family. In terms of assembly, homodimer. Mg(2+) serves as cofactor.

It is found in the cytoplasm. The enzyme catalyses (7R,8S)-7,8-diammoniononanoate + CO2 + ATP = (4R,5S)-dethiobiotin + ADP + phosphate + 3 H(+). The protein operates within cofactor biosynthesis; biotin biosynthesis; biotin from 7,8-diaminononanoate: step 1/2. Catalyzes a mechanistically unusual reaction, the ATP-dependent insertion of CO2 between the N7 and N8 nitrogen atoms of 7,8-diaminopelargonic acid (DAPA, also called 7,8-diammoniononanoate) to form a ureido ring. This chain is ATP-dependent dethiobiotin synthetase BioD, found in Burkholderia ambifaria (strain ATCC BAA-244 / DSM 16087 / CCUG 44356 / LMG 19182 / AMMD) (Burkholderia cepacia (strain AMMD)).